The primary structure comprises 183 residues: Large ribosomal subunit protein eL18 (183 aa).

Positions 150 to 183 (RHFGPAPGAPRSHTKPYVRTKGHEKARPSRRANV) are disordered.

It belongs to the eukaryotic ribosomal protein eL18 family.

It localises to the cytoplasm. The protein is Large ribosomal subunit protein eL18 (RpL18) of Bombyx mori (Silk moth).